Consider the following 66-residue polypeptide: Translational regulator CsrA (66 aa).

The protein belongs to the CsrA/RsmA family. In terms of assembly, homodimer; the beta-strands of each monomer intercalate to form a hydrophobic core, while the alpha-helices form wings that extend away from the core.

It localises to the cytoplasm. In terms of biological role, a key translational regulator that binds mRNA to regulate translation initiation and/or mRNA stability. Mediates global changes in gene expression, shifting from rapid growth to stress survival by linking envelope stress, the stringent response and the catabolite repression systems. Usually binds in the 5'-UTR; binding at or near the Shine-Dalgarno sequence prevents ribosome-binding, repressing translation, binding elsewhere in the 5'-UTR can activate translation and/or stabilize the mRNA. Its function is antagonized by small RNA(s). The chain is Translational regulator CsrA from Alkalilimnicola ehrlichii (strain ATCC BAA-1101 / DSM 17681 / MLHE-1).